The primary structure comprises 183 residues: MSPLLLWLGLMLCVSGLQAGDEEEHKCFLEGENLTLTCPYNIMLYSLSLKAWQRVRSHGSPETLVLTNTRKADFNVARAGKYLLEDYPTESVVKVTVTGLQRQDVGLYQCVVYLSPDNVIILRQRIRLAWCQGKPVMVIVLTCGFILNKGLVFSVLFVFLCKAGPKVLQPSKTSKVQGVSEKQ.

The signal sequence occupies residues 1-19 (MSPLLLWLGLMLCVSGLQA). At 20–138 (GDEEEHKCFL…AWCQGKPVMV (119 aa)) the chain is on the extracellular side. Residues 30–128 (EGENLTLTCP…VIILRQRIRL (99 aa)) enclose the Ig-like V-type domain. N-linked (GlcNAc...) asparagine glycosylation is present at asparagine 33. Cysteine 38 and cysteine 110 are oxidised to a cystine. Residues 139 to 159 (IVLTCGFILNKGLVFSVLFVF) form a helical membrane-spanning segment. Over 160–183 (LCKAGPKVLQPSKTSKVQGVSEKQ) the chain is Cytoplasmic.

In terms of assembly, interacts with TYROBP/DAP12. Expressed in macrophages and in T-cells.

It is found in the cell membrane. Forms a receptor signaling complex with TYROBP/DAP12 which mediates activation of macrophages as part of the innate immune response. This chain is Triggering receptor expressed on myeloid cells 3, found in Mus musculus (Mouse).